An 87-amino-acid polypeptide reads, in one-letter code: Cell division topological specificity factor (87 aa).

Belongs to the MinE family.

Prevents the cell division inhibition by proteins MinC and MinD at internal division sites while permitting inhibition at polar sites. This ensures cell division at the proper site by restricting the formation of a division septum at the midpoint of the long axis of the cell. The chain is Cell division topological specificity factor from Delftia acidovorans (strain DSM 14801 / SPH-1).